We begin with the raw amino-acid sequence, 426 residues long: Glutamate-1-semialdehyde 2,1-aminomutase (426 aa).

Lys-265 carries the post-translational modification N6-(pyridoxal phosphate)lysine.

It belongs to the class-III pyridoxal-phosphate-dependent aminotransferase family. HemL subfamily. As to quaternary structure, homodimer. The cofactor is pyridoxal 5'-phosphate.

The protein resides in the cytoplasm. It catalyses the reaction (S)-4-amino-5-oxopentanoate = 5-aminolevulinate. The protein operates within porphyrin-containing compound metabolism; protoporphyrin-IX biosynthesis; 5-aminolevulinate from L-glutamyl-tRNA(Glu): step 2/2. The protein is Glutamate-1-semialdehyde 2,1-aminomutase of Klebsiella pneumoniae subsp. pneumoniae (strain ATCC 700721 / MGH 78578).